A 144-amino-acid chain; its full sequence is 3-hydroxyacyl-[acyl-carrier-protein] dehydratase FabZ (144 aa).

His47 is an active-site residue.

It belongs to the thioester dehydratase family. FabZ subfamily.

The protein localises to the cytoplasm. It carries out the reaction a (3R)-hydroxyacyl-[ACP] = a (2E)-enoyl-[ACP] + H2O. Its function is as follows. Involved in unsaturated fatty acids biosynthesis. Catalyzes the dehydration of short chain beta-hydroxyacyl-ACPs and long chain saturated and unsaturated beta-hydroxyacyl-ACPs. The sequence is that of 3-hydroxyacyl-[acyl-carrier-protein] dehydratase FabZ from Nitrosomonas eutropha (strain DSM 101675 / C91 / Nm57).